A 207-amino-acid polypeptide reads, in one-letter code: Large ribosomal subunit protein uL4 (207 aa).

This sequence belongs to the universal ribosomal protein uL4 family. Part of the 50S ribosomal subunit.

One of the primary rRNA binding proteins, this protein initially binds near the 5'-end of the 23S rRNA. It is important during the early stages of 50S assembly. It makes multiple contacts with different domains of the 23S rRNA in the assembled 50S subunit and ribosome. Its function is as follows. Forms part of the polypeptide exit tunnel. This Rickettsia africae (strain ESF-5) protein is Large ribosomal subunit protein uL4.